A 252-amino-acid chain; its full sequence is Triosephosphate isomerase (252 aa).

Residue 9–11 coordinates substrate; the sequence is NWK. Residue H100 is the Electrophile of the active site. E171 acts as the Proton acceptor in catalysis. Substrate contacts are provided by residues G177, S216, and 237-238; that span reads GG.

This sequence belongs to the triosephosphate isomerase family. Homodimer.

Its subcellular location is the cytoplasm. It catalyses the reaction D-glyceraldehyde 3-phosphate = dihydroxyacetone phosphate. Its pathway is carbohydrate biosynthesis; gluconeogenesis. It functions in the pathway carbohydrate degradation; glycolysis; D-glyceraldehyde 3-phosphate from glycerone phosphate: step 1/1. Its function is as follows. Involved in the gluconeogenesis. Catalyzes stereospecifically the conversion of dihydroxyacetone phosphate (DHAP) to D-glyceraldehyde-3-phosphate (G3P). The sequence is that of Triosephosphate isomerase from Polynucleobacter necessarius subsp. necessarius (strain STIR1).